Reading from the N-terminus, the 760-residue chain is NAD(P)H-quinone oxidoreductase subunit 5, chloroplastic (760 aa).

16 consecutive transmembrane segments (helical) span residues Trp9–Phe29, Ile39–Phe59, Ile89–Val109, Phe125–Ile145, Ile147–Thr167, Gly185–Phe205, Asn221–Ala241, Thr260–Ala280, Leu282–Ile302, Leu329–Ile349, Ala356–Ser376, Ile398–Ser418, Tyr429–Phe449, Ile556–Pro576, Phe620–Tyr640, and Phe734–Phe754.

This sequence belongs to the complex I subunit 5 family. NDH is composed of at least 16 different subunits, 5 of which are encoded in the nucleus.

The protein resides in the plastid. Its subcellular location is the chloroplast thylakoid membrane. The enzyme catalyses a plastoquinone + NADH + (n+1) H(+)(in) = a plastoquinol + NAD(+) + n H(+)(out). It carries out the reaction a plastoquinone + NADPH + (n+1) H(+)(in) = a plastoquinol + NADP(+) + n H(+)(out). NDH shuttles electrons from NAD(P)H:plastoquinone, via FMN and iron-sulfur (Fe-S) centers, to quinones in the photosynthetic chain and possibly in a chloroplast respiratory chain. The immediate electron acceptor for the enzyme in this species is believed to be plastoquinone. Couples the redox reaction to proton translocation, and thus conserves the redox energy in a proton gradient. This chain is NAD(P)H-quinone oxidoreductase subunit 5, chloroplastic (ndhF), found in Populus alba (White poplar).